A 281-amino-acid chain; its full sequence is uncharacterized protein (281 aa).

The next 3 membrane-spanning stretches (helical) occupy residues 23–45 (LLLS…FFAA), 65–87 (IANF…ASLG), and 94–116 (TSVI…GSLS).

It belongs to the MscS (TC 1.A.23) family.

The protein localises to the cell membrane. This is an uncharacterized protein from Buchnera aphidicola subsp. Baizongia pistaciae (strain Bp).